The primary structure comprises 124 residues: Large ribosomal subunit protein bL20 (124 aa).

Belongs to the bacterial ribosomal protein bL20 family.

Functionally, binds directly to 23S ribosomal RNA and is necessary for the in vitro assembly process of the 50S ribosomal subunit. It is not involved in the protein synthesizing functions of that subunit. This chain is Large ribosomal subunit protein bL20 (rplT), found in Mycoplasma genitalium (strain ATCC 33530 / DSM 19775 / NCTC 10195 / G37) (Mycoplasmoides genitalium).